The sequence spans 542 residues: DNA-binding protein modulo (542 aa).

The segment at 1-166 is disordered; it reads MAQKKAVTVK…RGIPKVKVGK (166 aa). 2 positions are modified to phosphoserine: Ser-42 and Ser-44. Residues 59-114 show a composition bias toward acidic residues; the sequence is SEEDESDVEEQNDEQPGDDSDFETEEAAGLIDDEAEEDEEYNSDDEEDDDDDELEP. Residues Ser-120, Ser-129, and Ser-142 each carry the phosphoserine modification. The span at 123 to 135 shows a compositional bias: acidic residues; it reads ADEVDESDDDEEA. Positions 136 to 158 are enriched in basic and acidic residues; the sequence is PVEKPVSKKSEKANSEKSEENRG. RRM domains lie at 175-251, 258-331, 340-429, and 420-489; these read QIVF…QPRN, RTVV…RISQ, LTLV…NLTS, and RAIL…PNSL. Ser-304 is modified (phosphoserine). The residue at position 330 (Ser-330) is a Phosphoserine; by PKA. Residue Ser-443 is modified to Phosphoserine. Residues 505–542 are disordered; it reads RAPRKFQKDTKPNFGKKPFNKRPAQENGGKSFVKRARF.

The N-terminus is blocked.

It localises to the nucleus. Its capacity to bind DNA and protein(s), and its differential expression during development suggest a role in the regulation of gene expression during Drosophila development. It could, in interaction with other factors, be required for the translation of instructions provided by pattern forming genes and controls, via chromatin changes, the activity of genes critical for the process of morphogenesis of several embryonic territories. This chain is DNA-binding protein modulo (mod), found in Drosophila melanogaster (Fruit fly).